Here is a 117-residue protein sequence, read N- to C-terminus: Large ribosomal subunit protein uL18 (117 aa).

Belongs to the universal ribosomal protein uL18 family. In terms of assembly, part of the 50S ribosomal subunit; part of the 5S rRNA/L5/L18/L25 subcomplex. Contacts the 5S and 23S rRNAs.

Its function is as follows. This is one of the proteins that bind and probably mediate the attachment of the 5S RNA into the large ribosomal subunit, where it forms part of the central protuberance. The protein is Large ribosomal subunit protein uL18 of Hydrogenovibrio crunogenus (strain DSM 25203 / XCL-2) (Thiomicrospira crunogena).